The chain runs to 146 residues: DNA-directed RNA polymerase subunit beta (146 aa).

The protein belongs to the RNA polymerase beta chain family. The RNAP catalytic core consists of 2 alpha, 1 beta, 1 beta' and 1 omega subunit. When a sigma factor is associated with the core the holoenzyme is formed, which can initiate transcription.

It catalyses the reaction RNA(n) + a ribonucleoside 5'-triphosphate = RNA(n+1) + diphosphate. Its function is as follows. DNA-dependent RNA polymerase catalyzes the transcription of DNA into RNA using the four ribonucleoside triphosphates as substrates. In Liberibacter africanus (Citrus greening disease), this protein is DNA-directed RNA polymerase subunit beta (rpoB).